A 388-amino-acid polypeptide reads, in one-letter code: Succinate--CoA ligase [ADP-forming] subunit beta (388 aa).

In terms of domain architecture, ATP-grasp spans 9–244 (KQLFAEYGLP…PSQEDEREAH (236 aa)). ATP is bound by residues Lys-46, 53–55 (GRG), Glu-99, Thr-102, and Glu-107. Mg(2+) contacts are provided by Asn-199 and Asp-213. Substrate contacts are provided by residues Asn-264 and 321–323 (GIV).

The protein belongs to the succinate/malate CoA ligase beta subunit family. In terms of assembly, heterotetramer of two alpha and two beta subunits. Mg(2+) is required as a cofactor.

The catalysed reaction is succinate + ATP + CoA = succinyl-CoA + ADP + phosphate. It carries out the reaction GTP + succinate + CoA = succinyl-CoA + GDP + phosphate. Its pathway is carbohydrate metabolism; tricarboxylic acid cycle; succinate from succinyl-CoA (ligase route): step 1/1. Succinyl-CoA synthetase functions in the citric acid cycle (TCA), coupling the hydrolysis of succinyl-CoA to the synthesis of either ATP or GTP and thus represents the only step of substrate-level phosphorylation in the TCA. The beta subunit provides nucleotide specificity of the enzyme and binds the substrate succinate, while the binding sites for coenzyme A and phosphate are found in the alpha subunit. This chain is Succinate--CoA ligase [ADP-forming] subunit beta, found in Marinomonas sp. (strain MWYL1).